Consider the following 492-residue polypeptide: Steroid 21-hydroxylase (492 aa).

Positions 91 and 120 each coordinate heme b. A 17alpha-hydroxyprogesterone-binding site is contributed by arginine 231. Arginine 231 contributes to the progesterone binding site. Heme b is bound by residues histidine 363, arginine 424, and cysteine 426.

It belongs to the cytochrome P450 family. Heme b is required as a cofactor.

It localises to the endoplasmic reticulum membrane. The protein resides in the microsome membrane. It catalyses the reaction 17alpha-hydroxyprogesterone + reduced [NADPH--hemoprotein reductase] + O2 = 11-deoxycortisol + oxidized [NADPH--hemoprotein reductase] + H2O + H(+). The catalysed reaction is progesterone + reduced [NADPH--hemoprotein reductase] + O2 = 21-hydroxyprogesterone + oxidized [NADPH--hemoprotein reductase] + H2O + H(+). Functionally, specifically catalyzes the 21-hydroxylation of steroids. Required for the adrenal synthesis of mineralocorticoids and glucocorticoids. This chain is Steroid 21-hydroxylase (CYP21), found in Canis lupus familiaris (Dog).